Here is a 288-residue protein sequence, read N- to C-terminus: Proline iminopeptidase (288 aa).

One can recognise an AB hydrolase-1 domain in the interval 27 to 274 (PVIVLHGGPG…SAHMPYIEEP (248 aa)). The active-site Nucleophile is Ser-101. Residue Asp-240 is part of the active site. Catalysis depends on His-267, which acts as the Proton donor.

The protein belongs to the peptidase S33 family. Monomer.

It localises to the cytoplasm. The enzyme catalyses Release of N-terminal proline from a peptide.. With respect to regulation, completely inhibited by p-chloromercuribenzoate (PCMB) and heavy metal salts. Partially inhibited by proline and proline derivatives with proline as the amino terminus. Enzyme inactivated by PCMB is reactivated by incubation with 2-mercaptoethanol. Its function is as follows. Releases the N-terminal proline from various substrates including at least dipeptides Pro-Pro, Pro-Gln, Pro-Trp and Pro-Tyr. Also acts on amides (Pro-beta NA) and oligopeptides including Pro-Leu-GlyNH2, Pro-Leu-Gly, Pro-Phe-Gly-Lys, Pro-Pro-Ala-OBut and Pro-Pro-Gly-(Pro-Pro-Gly)(4). Higher activity toward small peptides (up to three residues), but very low activity for longer peptides. Has no activity against p-nitrophenyl acetate, poly_L-proline, Met-Pro or amino acyl amides other than Pro-betaNA (Pyr-betaNA, Phe-betaNA, Cys-betaNA, Met-betaNA, Leu-betaNA, Ala-betaNA and Z-Gly-Pro-betaNA). The chain is Proline iminopeptidase (pip) from Heyndrickxia coagulans (Weizmannia coagulans).